We begin with the raw amino-acid sequence, 591 residues long: Aspartate--tRNA ligase (591 aa).

Glu-173 provides a ligand contact to L-aspartate. The segment at Gln-197–Lys-200 is aspartate. Arg-219 contacts L-aspartate. ATP contacts are provided by residues Arg-219 to Glu-221 and Gln-228. His-446 contacts L-aspartate. Residue Glu-482 participates in ATP binding. L-aspartate is bound at residue Arg-489. Gly-534–Arg-537 provides a ligand contact to ATP.

It belongs to the class-II aminoacyl-tRNA synthetase family. Type 1 subfamily. As to quaternary structure, homodimer.

The protein localises to the cytoplasm. The enzyme catalyses tRNA(Asp) + L-aspartate + ATP = L-aspartyl-tRNA(Asp) + AMP + diphosphate. Catalyzes the attachment of L-aspartate to tRNA(Asp) in a two-step reaction: L-aspartate is first activated by ATP to form Asp-AMP and then transferred to the acceptor end of tRNA(Asp). This chain is Aspartate--tRNA ligase, found in Limosilactobacillus fermentum (strain NBRC 3956 / LMG 18251) (Lactobacillus fermentum).